The primary structure comprises 285 residues: 4-diphosphocytidyl-2-C-methyl-D-erythritol kinase (285 aa).

Residue Lys12 is part of the active site. 94–104 provides a ligand contact to ATP; it reads PAQAGMGGGSS. Asp136 is a catalytic residue.

Belongs to the GHMP kinase family. IspE subfamily.

The enzyme catalyses 4-CDP-2-C-methyl-D-erythritol + ATP = 4-CDP-2-C-methyl-D-erythritol 2-phosphate + ADP + H(+). It functions in the pathway isoprenoid biosynthesis; isopentenyl diphosphate biosynthesis via DXP pathway; isopentenyl diphosphate from 1-deoxy-D-xylulose 5-phosphate: step 3/6. In terms of biological role, catalyzes the phosphorylation of the position 2 hydroxy group of 4-diphosphocytidyl-2C-methyl-D-erythritol. This Paracidovorax citrulli (strain AAC00-1) (Acidovorax citrulli) protein is 4-diphosphocytidyl-2-C-methyl-D-erythritol kinase.